The following is a 140-amino-acid chain: Large ribosomal subunit protein bL17 (140 aa).

It belongs to the bacterial ribosomal protein bL17 family. As to quaternary structure, part of the 50S ribosomal subunit. Contacts protein L32.

In Paracoccus denitrificans (strain Pd 1222), this protein is Large ribosomal subunit protein bL17.